The primary structure comprises 266 residues: Chymotrypsin-like elastase family member 1 (266 aa).

Residues 1 to 16 (MLRFLVFASLVLYGHS) form the signal peptide. Positions 17–26 (TQDFPETNAR) are cleaved as a propeptide — activation peptide. In terms of domain architecture, Peptidase S1 spans 27–264 (VVGGAEARRN…YISWMNNVIA (238 aa)). Cys-56 and Cys-72 are disulfide-bonded. The active-site Charge relay system is the His-71. Asp-85, Asn-87, Gln-90, and Glu-95 together coordinate Ca(2+). The active-site Charge relay system is the Asp-119. 3 disulfides stabilise this stretch: Cys-153–Cys-220, Cys-184–Cys-200, and Cys-210–Cys-240. Catalysis depends on Ser-214, which acts as the Charge relay system.

It belongs to the peptidase S1 family. Elastase subfamily. The cofactor is Ca(2+). As to expression, pancreas.

Its subcellular location is the secreted. It catalyses the reaction Hydrolysis of proteins, including elastin. Preferential cleavage: Ala-|-Xaa.. Its function is as follows. Serine proteases that hydrolyze many proteins in addition to elastin. This is Chymotrypsin-like elastase family member 1 (Cela1) from Rattus norvegicus (Rat).